Consider the following 338-residue polypeptide: Popeye domain-containing protein 1 (338 aa).

The Extracellular segment spans residues 1 to 40 (MATESILITTLPMDLNSQINNVTFGLNENETLCENWREIH). Asparagine 21 and asparagine 29 each carry an N-linked (GlcNAc...) asparagine glycan. The helical transmembrane segment at 41–61 (HLVFHLANTCFAAGLVIPSTL) threads the bilayer. Topologically, residues 62–65 (NLHM) are cytoplasmic. A helical membrane pass occupies residues 66–86 (ILLRGMLCLGCIFFIIWAILF). At 87–91 (RCALD) the chain is on the extracellular side. Residues 92–112 (IMIWNATFLSMNFMHFIYLVY) form a helical membrane-spanning segment. Over 113 to 338 (KKRPIKIEKD…VGPLSHAVFC (226 aa)) the chain is Cytoplasmic.

It belongs to the popeye family.

It localises to the lateral cell membrane. The protein localises to the cell junction. The protein resides in the tight junction. Its subcellular location is the membrane. It is found in the cell membrane. It localises to the sarcolemma. The protein localises to the caveola. Cell adhesion molecule involved in the establishment and/or maintenance of cell integrity. May play a role in vamp3-mediated vesicular transport and recycling of different receptor molecules. May be involved in the formation and regulation of the tight junction (TJ) paracellular permeability barrier in epithelial cells. May induce primordial adhesive contact and aggregation of epithelial cells in a Ca(2+)-independent manner. May be involved in epithelial movement during corneal sheet formation and regeneration. May play a role in the regulation of cell shape and movement by modulating the Rho-GTPase activity. May be involved in skeletal muscle and heart development as well as in the maintenance of heart function. May also be involved in striated muscle regeneration and in the regulation of cell spreading. This chain is Popeye domain-containing protein 1 (popdc1), found in Xenopus tropicalis (Western clawed frog).